Consider the following 267-residue polypeptide: Putative transcription factor Ovo-like 1 (267 aa).

C2H2-type zinc fingers lie at residues 118-140 (FTCHICQKSFTHQRMLNRHMKCH), 146-168 (HLCTYCGKGFNDTFDLKRHVRTH), 174-197 (YKCSLCDKAFTQRCSLESHLKKIH), and 213-236 (YVCEECGCTSESQEGHVLHLKERH).

As to expression, expressed in skin, testis, kidney and weakly in lung. Not detected in heart, brain, spleen, liver and skeletal muscle.

Its subcellular location is the nucleus. Putative transcription factor. Involved in hair formation and spermatogenesis. May function in the differentiation and/or maintenance of the urogenital system. This Mus musculus (Mouse) protein is Putative transcription factor Ovo-like 1 (Ovol1).